Here is a 175-residue protein sequence, read N- to C-terminus: Adenine phosphoribosyltransferase (175 aa).

Belongs to the purine/pyrimidine phosphoribosyltransferase family. As to quaternary structure, homodimer.

The protein resides in the cytoplasm. It catalyses the reaction AMP + diphosphate = 5-phospho-alpha-D-ribose 1-diphosphate + adenine. The protein operates within purine metabolism; AMP biosynthesis via salvage pathway; AMP from adenine: step 1/1. Functionally, catalyzes a salvage reaction resulting in the formation of AMP, that is energically less costly than de novo synthesis. This Francisella philomiragia subsp. philomiragia (strain ATCC 25017 / CCUG 19701 / FSC 153 / O#319-036) protein is Adenine phosphoribosyltransferase.